The chain runs to 250 residues: F-box only protein 17 (250 aa).

Positions 15-62 (HMALAELPPELLLQVLSHVPPRALVTRCRPVCRAWRDLVDGPSVWLLQ) constitute an F-box domain. The FBA domain maps to 99 to 250 (FCLLAPLGRN…GLLQGLSRLH (152 aa)).

As to quaternary structure, part of a SCF (SKP1-cullin-F-box) protein ligase complex. Interacts with SKP1 and CUL1.

Its function is as follows. Substrate-recognition component of the SCF (SKP1-CUL1-F-box protein)-type E3 ubiquitin ligase complex. Able to recognize and bind denatured glycoproteins, which are modified with complex-type oligosaccharides. Also recognizes sulfated glycans. Does not bind high-mannose glycoproteins. This Rattus norvegicus (Rat) protein is F-box only protein 17 (Fbxo17).